Consider the following 467-residue polypeptide: Chromosomal replication initiator protein DnaA (467 aa).

The domain I, interacts with DnaA modulators stretch occupies residues 1-85 (MSLSLWQQCL…FEVGAKPASS (85 aa)). A domain II region spans residues 85-130 (SLQKGAVSPAAAAIPAAQVQTARVAPTIVRPGWDNVPAPAEPTYRS). The tract at residues 131–347 (NVNVKHTFDN…GALNRVIANA (217 aa)) is domain III, AAA+ region. 4 residues coordinate ATP: glycine 175, glycine 177, lysine 178, and threonine 179. A domain IV, binds dsDNA region spans residues 348 to 467 (NFTGRAITID…FSNLIRTLSS (120 aa)).

Belongs to the DnaA family. Oligomerizes as a right-handed, spiral filament on DNA at oriC.

The protein localises to the cytoplasm. Plays an essential role in the initiation and regulation of chromosomal replication. ATP-DnaA binds to the origin of replication (oriC) to initiate formation of the DNA replication initiation complex once per cell cycle. Binds the DnaA box (a 9 base pair repeat at the origin) and separates the double-stranded (ds)DNA. Forms a right-handed helical filament on oriC DNA; dsDNA binds to the exterior of the filament while single-stranded (ss)DNA is stabiized in the filament's interior. The ATP-DnaA-oriC complex binds and stabilizes one strand of the AT-rich DNA unwinding element (DUE), permitting loading of DNA polymerase. After initiation quickly degrades to an ADP-DnaA complex that is not apt for DNA replication. Binds acidic phospholipids. This chain is Chromosomal replication initiator protein DnaA, found in Klebsiella pneumoniae (strain 342).